A 373-amino-acid chain; its full sequence is 3 beta-hydroxysteroid dehydrogenase/Delta 5--&gt;4-isomerase type 1 (373 aa).

Residues Gly-10–Val-15, Tyr-155, and Lys-159 contribute to the NADP(+) site. Lys-159 acts as the Proton donor in catalysis. The chain crosses the membrane as a helical span at residues Leu-288–Phe-308.

Belongs to the 3-beta-HSD family. As to expression, adrenal glands, kidney, testes and ovaries.

The protein resides in the endoplasmic reticulum membrane. Its subcellular location is the mitochondrion membrane. It carries out the reaction a 3beta-hydroxy-Delta(5)-steroid + NAD(+) = a 3-oxo-Delta(5)-steroid + NADH + H(+). The enzyme catalyses pregnenolone + NAD(+) = pregn-5-ene-3,20-dione + NADH + H(+). The catalysed reaction is 3beta-hydroxyandrost-5-en-17-one + NAD(+) = androst-5-ene-3,17-dione + NADH + H(+). It catalyses the reaction androst-5-en-3beta,17beta-diol + NAD(+) = 17beta-hydroxy-androst-5-en-3-one + NADH + H(+). It carries out the reaction a 3beta-hydroxysteroid + NADP(+) = a 3-oxosteroid + NADPH + H(+). The enzyme catalyses 5alpha-androstane-3beta,17beta-diol + NADP(+) = 17beta-hydroxy-5alpha-androstan-3-one + NADPH + H(+). The catalysed reaction is 3beta-hydroxy-5alpha-androstan-17-one + NADP(+) = 5alpha-androstan-3,17-dione + NADPH + H(+). It catalyses the reaction a 3-oxo-Delta(5)-steroid = a 3-oxo-Delta(4)-steroid. It carries out the reaction pregn-5-ene-3,20-dione = progesterone. The enzyme catalyses androst-5-ene-3,17-dione = androst-4-ene-3,17-dione. The catalysed reaction is 17beta-hydroxy-androst-5-en-3-one = testosterone. It catalyses the reaction 5alpha-androstane-3beta,17beta-diol + NAD(+) = 17beta-hydroxy-5alpha-androstan-3-one + NADH + H(+). Its pathway is steroid hormone biosynthesis. It functions in the pathway steroid metabolism. In terms of biological role, a bifunctional enzyme responsible for the oxidation and isomerization of 3beta-hydroxy-Delta(5)-steroid precursors to 3-oxo-Delta(4)-steroids, an essential step in steroid hormone biosynthesis. Specifically catalyzes the conversion of pregnenolone to progesterone, dehydroepiandrosterone (DHEA) to 4-androstenedione, and androstenediol to testosterone. Additionally, catalyzes the interconversion between 3beta-hydroxy and 3-oxo-5alpha-androstane steroids controlling the bioavalability of the active forms. Specifically converts dihydrotestosterone to its inactive form 5alpha-androstanediol, that does not bind androgen receptor/AR. Also converts androstanedione, a precursor of testosterone and estrone, to epiandrosterone. Expected to use NAD(+) as preferred electron donor for the 3beta-hydroxy-steroid dehydrogenase activity and NADPH for the 3-ketosteroid reductase activity. The sequence is that of 3 beta-hydroxysteroid dehydrogenase/Delta 5--&gt;4-isomerase type 1 from Rattus norvegicus (Rat).